A 219-amino-acid polypeptide reads, in one-letter code: MAEHIIVTLDGPAGVGKTTLARNIAEELGIAYMDTGAMFRSIGWKLGNVVESVPPAEIEKKLAGFRFSLSGAGAATQLSLNGTPVGDEIRTEEVALLASAVATLPVVRTFLKKTQQKLGSEVSLVAEGRDMGTVIFPAARYKFFLDATPEERARRRYEQLTAAGETPDLKALTDQIRKRDHQDRSRVVAPLRPADDAIIIDTTELDVQGVFAAIMSKLK.

Glycine 11–threonine 19 provides a ligand contact to ATP.

This sequence belongs to the cytidylate kinase family. Type 1 subfamily.

Its subcellular location is the cytoplasm. It carries out the reaction CMP + ATP = CDP + ADP. The catalysed reaction is dCMP + ATP = dCDP + ADP. The chain is Cytidylate kinase from Oleidesulfovibrio alaskensis (strain ATCC BAA-1058 / DSM 17464 / G20) (Desulfovibrio alaskensis).